The chain runs to 787 residues: Endonuclease MutS2 (787 aa).

An ATP-binding site is contributed by 335–342; it reads GPNTGGKT. The region spanning 712–787 is the Smr domain; the sequence is LDLRGERYED…GLGNTVIELK (76 aa).

It belongs to the DNA mismatch repair MutS family. MutS2 subfamily. Homodimer. Binds to stalled ribosomes, contacting rRNA.

Endonuclease that is involved in the suppression of homologous recombination and thus may have a key role in the control of bacterial genetic diversity. In terms of biological role, acts as a ribosome collision sensor, splitting the ribosome into its 2 subunits. Detects stalled/collided 70S ribosomes which it binds and splits by an ATP-hydrolysis driven conformational change. Acts upstream of the ribosome quality control system (RQC), a ribosome-associated complex that mediates the extraction of incompletely synthesized nascent chains from stalled ribosomes and their subsequent degradation. Probably generates substrates for RQC. The sequence is that of Endonuclease MutS2 from Shouchella clausii (strain KSM-K16) (Alkalihalobacillus clausii).